Reading from the N-terminus, the 2179-residue chain is Probable inactive serine/threonine-protein kinase lvsG (2179 aa).

Residues 100–167 are disordered; it reads DHDLNKNKNN…TSISLNDLNS (68 aa). 2 stretches are compositionally biased toward low complexity: residues 106-121 and 141-159; these read NKNN…NNSG and LSPS…LSTS. The stretch at 216–256 is one WD 1 repeat; it reads LYERSLKTSQQQQQQQQQQFKFQPNETLSLWEYFDEINSPP. Disordered stretches follow at residues 281–300, 523–556, 589–621, 778–801, 844–959, 1033–1055, 1079–1153, 1339–1362, and 1785–1807; these read LDNK…NSQS, DNDN…TVGW, DSMG…NSGK, KSLK…QPQF, NNHH…NKPS, AQQQ…SKQL, GISK…STTD, NHSN…KNGS, and TTTT…PNSL. The 339-residue stretch at 463–801 folds into the BEACH domain; that stretch reads YHQPLENQFE…QQQTQQQPQF (339 aa). A compositionally biased stretch (low complexity) spans 534 to 548; it reads NSSSSNNNNNNNNED. The segment covering 590–602 has biased composition (gly residues); the sequence is SMGGGIGSIGSTG. Composition is skewed to low complexity over residues 783–800, 853–943, 1033–1047, and 1084–1098; these read QRQQ…QQPQ, NSNI…GVNN, AQQQ…QQQA, and TTNA…TNSN. A coiled-coil region spans residues 1021 to 1049; that stretch reads LQQQLQQQQQQQAQQQQSQQQSQQQQANS. In terms of domain architecture, Protein kinase spans 1064 to 1400; the sequence is ESMIKKYSNG…VNELLSSSLF (337 aa). Polar residues predominate over residues 1099 to 1122; it reads MGDSIGNNITSPPSPTSLKDSSSI. Low complexity predominate over residues 1123–1134; it reads QQQQQQQQQQQQ. Residues 1135-1153 are compositionally biased toward polar residues; the sequence is NSESTRPITPPNVSNSTTD. Low complexity-rich tracts occupy residues 1339–1360 and 1785–1801; these read NHSN…NNKN and TTTT…NNNN. WD repeat units lie at residues 1864 to 1903, 1906 to 1942, 1945 to 1983, 2007 to 2048, 2052 to 2089, and 2149 to 2179; these read EHNA…SLTT, QHMH…KVNV, EPTG…LTHE, SNSN…ILEQ, HHDS…PIIS, and PKQS…KICQ.

It belongs to the protein kinase superfamily. Ser/Thr protein kinase family.

This is Probable inactive serine/threonine-protein kinase lvsG (lvsG) from Dictyostelium discoideum (Social amoeba).